Consider the following 118-residue polypeptide: Large ribosomal subunit protein uL18 (118 aa).

Positions 1–24 are disordered; that stretch reads MISKPDKNKIRQKRHRRVRGKLSG. The segment covering 10 to 20 has biased composition (basic residues); that stretch reads IRQKRHRRVRG.

This sequence belongs to the universal ribosomal protein uL18 family. Part of the 50S ribosomal subunit; part of the 5S rRNA/L5/L18/L25 subcomplex. Contacts the 5S and 23S rRNAs.

Functionally, this is one of the proteins that bind and probably mediate the attachment of the 5S RNA into the large ribosomal subunit, where it forms part of the central protuberance. This Streptococcus agalactiae serotype III (strain NEM316) protein is Large ribosomal subunit protein uL18.